A 383-amino-acid polypeptide reads, in one-letter code: Probable 2-succinylbenzoate--CoA ligase (383 aa).

This sequence belongs to the ATP-dependent AMP-binding enzyme family. MenE subfamily.

It catalyses the reaction 2-succinylbenzoate + ATP + CoA = 2-succinylbenzoyl-CoA + AMP + diphosphate. It participates in quinol/quinone metabolism; 1,4-dihydroxy-2-naphthoate biosynthesis; 1,4-dihydroxy-2-naphthoate from chorismate: step 5/7. Its pathway is quinol/quinone metabolism; menaquinone biosynthesis. In terms of biological role, converts 2-succinylbenzoate (OSB) to 2-succinylbenzoyl-CoA (OSB-CoA). May be involved in the biosynthesis of menaquinone. This Mycobacterium tuberculosis (strain CDC 1551 / Oshkosh) protein is Probable 2-succinylbenzoate--CoA ligase (menE).